The sequence spans 154 residues: Large ribosomal subunit protein uL15 (154 aa).

The interval 1-54 (MKLHDLTPAPGSRKPKKRVGRGPGGTDKTAGRGHKGQKSRSGAGKGPFFEGGRS) is disordered.

It belongs to the universal ribosomal protein uL15 family. Part of the 50S ribosomal subunit.

In terms of biological role, binds to the 23S rRNA. The sequence is that of Large ribosomal subunit protein uL15 from Deinococcus geothermalis (strain DSM 11300 / CIP 105573 / AG-3a).